A 191-amino-acid chain; its full sequence is Large ribosomal subunit protein uL5 (191 aa).

The protein belongs to the universal ribosomal protein uL5 family. As to quaternary structure, part of the 50S ribosomal subunit; part of the 5S rRNA/L5/L18/L25 subcomplex. Contacts the 5S rRNA and the P site tRNA. Forms a bridge to the 30S subunit in the 70S ribosome.

Its function is as follows. This is one of the proteins that bind and probably mediate the attachment of the 5S RNA into the large ribosomal subunit, where it forms part of the central protuberance. In the 70S ribosome it contacts protein S13 of the 30S subunit (bridge B1b), connecting the 2 subunits; this bridge is implicated in subunit movement. Contacts the P site tRNA; the 5S rRNA and some of its associated proteins might help stabilize positioning of ribosome-bound tRNAs. This is Large ribosomal subunit protein uL5 from Corynebacterium glutamicum (strain R).